The primary structure comprises 367 residues: Fructose-1,6-bisphosphatase class 1 3 (367 aa).

This sequence belongs to the FBPase class 1 family. In terms of assembly, homotetramer.

The protein resides in the cytoplasm. The enzyme catalyses beta-D-fructose 1,6-bisphosphate + H2O = beta-D-fructose 6-phosphate + phosphate. It participates in carbohydrate biosynthesis; gluconeogenesis. This is Fructose-1,6-bisphosphatase class 1 3 from Paraburkholderia phymatum (strain DSM 17167 / CIP 108236 / LMG 21445 / STM815) (Burkholderia phymatum).